The sequence spans 376 residues: Heat-inducible transcription repressor HrcA (376 aa).

It belongs to the HrcA family.

Its function is as follows. Negative regulator of class I heat shock genes (grpE-dnaK-dnaJ and groELS operons). Prevents heat-shock induction of these operons. This is Heat-inducible transcription repressor HrcA from Nostoc punctiforme (strain ATCC 29133 / PCC 73102).